The chain runs to 1479 residues: Peroxidasin homolog (1479 aa).

The first 26 residues, 1 to 26, serve as a signal peptide directing secretion; sequence MAKRSRGPGRRCLLALVLFCAWGTLA. Residues 27–63 enclose the LRRNT domain; sequence VVAQKPGAGCPSRCLCFRTTVRCMHLLLEAVPAVAPQ. Cystine bridges form between cysteine 36/cysteine 42 and cysteine 40/cysteine 49. LRR repeat units follow at residues 61 to 84, 85 to 108, 110 to 132, 133 to 156, 157 to 180, and 182 to 204; these read APQT…AFRR, LRNL…AFED, ENLK…AFKG, LASL…SFQH, LPKL…TFNH, and ESMK…LWLA. One can recognise an LRRCT domain in the interval 192–244; it reads NTLHCDCEILWLADLLKTYAESGNAQAAAICEYPRRIQGRSVATITPEELNCE. 6 disulfides stabilise this stretch: cysteine 196–cysteine 243, cysteine 198–cysteine 222, cysteine 267–cysteine 317, cysteine 363–cysteine 412, cysteine 454–cysteine 502, and cysteine 546–cysteine 594. Ig-like C2-type domains are found at residues 246 to 332, 342 to 428, 433 to 520, and 521 to 610; these read PRIT…QEVT, PTFV…AFII, PQFT…LTVQ, and PRVT…MVLS. N-linked (GlcNAc...) asparagine glycosylation is found at asparagine 640, asparagine 699, asparagine 719, and asparagine 731. 4 disulfides stabilise this stretch: cysteine 723/cysteine 885, cysteine 732/cysteine 748, cysteine 847/cysteine 857, and cysteine 851/cysteine 875. Aspartate 826 lines the heme b pocket. Histidine 827 acts as the Proton acceptor in catalysis. Aspartate 828 is a Ca(2+) binding site. A glycan (N-linked (GlcNAc...) asparagine) is linked at asparagine 865. Ca(2+) is bound by residues threonine 907, tyrosine 909, aspartate 911, and serine 913. A disulfide bridge connects residues cysteine 959 and cysteine 970. Residue asparagine 964 is glycosylated (N-linked (GlcNAc...) asparagine). Residues glutamate 980 and histidine 1074 each contribute to the heme b site. Residues 1151-1175 form an LRR 7 repeat; it reads ALDLAAINIQRGRDHGIPPYHDYRV. Tyrosine 1176 bears the Phosphotyrosine mark. 2 cysteine pairs are disulfide-bonded: cysteine 1177–cysteine 1234 and cysteine 1275–cysteine 1301. A glycan (N-linked (GlcNAc...) asparagine) is linked at asparagine 1178. Serine 1180 is subject to Phosphoserine. One copy of the LRR 8 repeat lies at 1270–1291; the sequence is LARILCDNADNITRVQSDVFRV. N-linked (GlcNAc...) asparagine glycosylation is found at asparagine 1280, asparagine 1368, and asparagine 1425. A required in homotrimerization region spans residues 1315 to 1411; sequence CCEDCRTRGQ…QIKKLESRLS (97 aa). The segment at 1342–1380 is disordered; the sequence is YQEDKPTKKTRPRKIPSVGRQGEHLSNSTSAFSTRSDAS. Over residues 1365–1380 the composition is skewed to polar residues; sequence HLSNSTSAFSTRSDAS. Residues 1413 to 1471 enclose the VWFC domain; the sequence is TECVDAGGESHANNTKWKKDACTICECKDGQVTCFVEACPPATCAVPVNIPGACCPVCL.

The protein belongs to the peroxidase family. XPO subfamily. In terms of assembly, homotrimer; disulfide-linked. The homotrimer form is predominant. Homooligomer; disulfide-linked. Oligomerization occurs intracellularly before C-terminal proteolytic cleavage. Interacts with PXDNL; this interaction inhibits the peroxidase activity of PXDN. The cofactor is Ca(2+). Heme b is required as a cofactor. Post-translationally, glycosylated. Four sites are completely N-glycosylated (Asn-640, Asn-731, Asn-865 and Asn-1425), whereas the others are found partially glycosylated. Processed by FURIN and the proteolytic processing largely depends on the peroxidase activity of PXDN. The proteolytic cleavage occurs after intracellular homotrimerization and releases into the extracellular matrix a large, catalytically active fragment and a smaller fragment consisting primarily of the C-terminal VWFC domain. The processing enhances both peroxidase activity and sulfilimine cross-links formation. As to expression, expressed at higher levels in heart, lung, ovary, spleen, intestine and placenta, and at lower levels in liver, colon, pancreas, kidney, thymus, skeletal muscle and prostate. Expressed in tumors such as melanoma, breast cancer, ovarian cancer and glioblastoma. A shorter form probably lacking the signal sequence is found in testis and in EB1 cells undergoing p53/TP53-dependent apoptosis.

Its subcellular location is the secreted. The protein resides in the extracellular space. The protein localises to the extracellular matrix. It localises to the endoplasmic reticulum. It is found in the cell surface. Its subcellular location is the basement membrane. It catalyses the reaction L-lysyl-[collagen] + L-methionyl-[collagen] + H2O2 = [collagen]-L-lysyl-N-S-L-methionyl-[collagen] + 2 H2O + H(+). The enzyme catalyses bromide + H2O2 = hypobromite + H2O. It carries out the reaction L-lysyl-[collagen] + L-methionyl-[collagen] + hypobromite = [collagen]-L-lysyl-N-S-L-methionyl-[collagen] + bromide + H2O + H(+). The catalysed reaction is L-tyrosyl-[protein] + bromide + H2O2 + H(+) = 3-bromo-L-tyrosyl-[protein] + 2 H2O. It catalyses the reaction hypobromite + L-tyrosyl-[protein] + H(+) = 3-bromo-L-tyrosyl-[protein] + H2O. Its activity is regulated as follows. The hypobromous acid formation is activated by increasing nitrite concentrations and inhibited by increasing urate concentrations. Catalyzes the two-electron oxidation of bromide by hydrogen peroxide and generates hypobromite as a reactive intermediate which mediates the formation of sulfilimine cross-links between methionine and hydroxylysine residues within an uncross-linked collagen IV/COL4A1 NC1 hexamer. In turns, directly contributes to the collagen IV network-dependent fibronectin/FN and laminin assembly, which is required for full extracellular matrix (ECM)-mediated signaling. Thus, sulfilimine cross-links are essential for growth factor-induced cell proliferation and survival in endothelial cells, an event essential to basement membrane integrity. In addition, through the bromide oxidation, may promote tubulogenesis and induce angiogenesis through ERK1/2, Akt, and FAK pathways. Moreover brominates alpha2 collagen IV chain/COL4A2 at 'Tyr-1485' and leads to bromine enrichment of the basement membranes. In vitro, can also catalyze the two-electron oxidation of thiocyanate and iodide and these two substrates could effectively compete with bromide and thus inhibit the formation of sulfilimine bonds. Binds laminins. May play a role in the organization of eyeball structure and lens development during eye development. The sequence is that of Peroxidasin homolog from Homo sapiens (Human).